A 397-amino-acid polypeptide reads, in one-letter code: Elongation factor Tu (397 aa).

In terms of domain architecture, tr-type G spans 10–207 (KPHVNIGTIG…AVDESIPEPV (198 aa)). A G1 region spans residues 19 to 26 (GHVDHGKT). 19–26 (GHVDHGKT) lines the GTP pocket. Thr26 serves as a coordination point for Mg(2+). The segment at 63–67 (GITIN) is G2. The segment at 84 to 87 (DAPG) is G3. Residues 84-88 (DAPGH) and 139-142 (NKSD) contribute to the GTP site. The interval 139-142 (NKSD) is G4. Residues 177–179 (SGL) form a G5 region.

It belongs to the TRAFAC class translation factor GTPase superfamily. Classic translation factor GTPase family. EF-Tu/EF-1A subfamily. In terms of assembly, monomer.

The protein resides in the cytoplasm. It carries out the reaction GTP + H2O = GDP + phosphate + H(+). GTP hydrolase that promotes the GTP-dependent binding of aminoacyl-tRNA to the A-site of ribosomes during protein biosynthesis. The protein is Elongation factor Tu of Clavibacter michiganensis subsp. michiganensis (strain NCPPB 382).